The following is a 200-amino-acid chain: NADH-quinone oxidoreductase subunit B (200 aa).

[4Fe-4S] cluster-binding residues include Cys78, Cys79, Cys144, and Cys174.

Belongs to the complex I 20 kDa subunit family. In terms of assembly, NDH-1 is composed of 14 different subunits. Subunits NuoB, C, D, E, F, and G constitute the peripheral sector of the complex. Requires [4Fe-4S] cluster as cofactor.

Its subcellular location is the cell membrane. It carries out the reaction a quinone + NADH + 5 H(+)(in) = a quinol + NAD(+) + 4 H(+)(out). NDH-1 shuttles electrons from NADH, via FMN and iron-sulfur (Fe-S) centers, to quinones in the respiratory chain. The immediate electron acceptor for the enzyme in this species is believed to be ubiquinone. Couples the redox reaction to proton translocation (for every two electrons transferred, four hydrogen ions are translocated across the cytoplasmic membrane), and thus conserves the redox energy in a proton gradient. The chain is NADH-quinone oxidoreductase subunit B from Dehalococcoides mccartyi (strain CBDB1).